The sequence spans 189 residues: Phosphoheptose isomerase (189 aa).

One can recognise an SIS domain in the interval 33-189; it reads CTDTLKAGNK…ELVEREIYGG (157 aa). Substrate is bound at residue 48 to 50; the sequence is NGG. Residues His57 and Glu61 each contribute to the Zn(2+) site. Substrate is bound by residues Glu61, 90 to 91, 116 to 118, Ser121, and Gln168; these read ND and STS. 2 residues coordinate Zn(2+): Gln168 and His176.

Belongs to the SIS family. GmhA subfamily. The cofactor is Zn(2+).

The protein localises to the cytoplasm. The catalysed reaction is 2 D-sedoheptulose 7-phosphate = D-glycero-alpha-D-manno-heptose 7-phosphate + D-glycero-beta-D-manno-heptose 7-phosphate. The protein operates within carbohydrate biosynthesis; D-glycero-D-manno-heptose 7-phosphate biosynthesis; D-glycero-alpha-D-manno-heptose 7-phosphate and D-glycero-beta-D-manno-heptose 7-phosphate from sedoheptulose 7-phosphate: step 1/1. Its function is as follows. Catalyzes the isomerization of sedoheptulose 7-phosphate in D-glycero-D-manno-heptose 7-phosphate. The sequence is that of Phosphoheptose isomerase from Akkermansia muciniphila (strain ATCC BAA-835 / DSM 22959 / JCM 33894 / BCRC 81048 / CCUG 64013 / CIP 107961 / Muc).